The chain runs to 132 residues: D-ribose pyranase (132 aa).

The Proton donor role is filled by H20. Substrate contacts are provided by residues D28, H99, and 121–123 (YAN).

Belongs to the RbsD / FucU family. RbsD subfamily. As to quaternary structure, homodecamer.

The protein resides in the cytoplasm. It carries out the reaction beta-D-ribopyranose = beta-D-ribofuranose. Its pathway is carbohydrate metabolism; D-ribose degradation; D-ribose 5-phosphate from beta-D-ribopyranose: step 1/2. In terms of biological role, catalyzes the interconversion of beta-pyran and beta-furan forms of D-ribose. In Chromobacterium violaceum (strain ATCC 12472 / DSM 30191 / JCM 1249 / CCUG 213 / NBRC 12614 / NCIMB 9131 / NCTC 9757 / MK), this protein is D-ribose pyranase.